Here is a 349-residue protein sequence, read N- to C-terminus: Protein RecA (349 aa).

69–76 (GPESSGKT) is an ATP binding site.

Belongs to the RecA family.

The protein localises to the cytoplasm. Its function is as follows. Can catalyze the hydrolysis of ATP in the presence of single-stranded DNA, the ATP-dependent uptake of single-stranded DNA by duplex DNA, and the ATP-dependent hybridization of homologous single-stranded DNAs. It interacts with LexA causing its activation and leading to its autocatalytic cleavage. This chain is Protein RecA, found in Crocosphaera subtropica (strain ATCC 51142 / BH68) (Cyanothece sp. (strain ATCC 51142)).